A 67-amino-acid polypeptide reads, in one-letter code: Cysteine-rich venom protein bucarin (67 aa).

The SCP domain occupies 13–58 (VDKHNALRRSVRPTARNMLQMEWNSNAAQNAKRFADRCTFAHSPPH).

The protein belongs to the CRISP family. In terms of processing, contains 8 disulfide bonds. In terms of tissue distribution, expressed by the venom gland.

The protein localises to the secreted. In terms of biological role, blocks contraction of smooth muscle elicited by high potassium-induced depolarization, but does not block caffeine-stimulated contraction. May target voltage-gated calcium channels on smooth muscle. The chain is Cysteine-rich venom protein bucarin from Bungarus candidus (Malayan krait).